A 191-amino-acid polypeptide reads, in one-letter code: Chromobox protein homolog 5 (191 aa).

Residues Ser11, Ser12, Ser13, and Ser14 each carry the phosphoserine modification. The Chromo 1 domain maps to 20–78 (YVVEKVLDRRVVKGQVEYLLKWKGFSEEHNTWEPEKNLDCPELISEFMKKYKKMKEGEN). Lys32 is covalently cross-linked (Glycyl lysine isopeptide (Lys-Gly) (interchain with G-Cter in SUMO2)). Lys40 is subject to N6-acetyllysine. A disordered region spans residues 70–117 (YKKMKEGENNKPREKSESNKRKSNFSNSADDIKSKKKREQSNDIARGF). The segment covering 73–89 (MKEGENNKPREKSESNK) has biased composition (basic and acidic residues). Lys91 is covalently cross-linked (Glycyl lysine isopeptide (Lys-Gly) (interchain with G-Cter in SUMO2)). Phosphoserine occurs at positions 92, 95, and 97. Residues Lys102, Lys106, Lys154, and Lys184 each participate in a glycyl lysine isopeptide (Lys-Gly) (interchain with G-Cter in SUMO2) cross-link. Residues 121–179 (LEPEKIIGATDSCGDLMFLMKWKDTDEADLVLAKEANVKCPQIVIAFYEERLTWHAYPE) form the Chromo 2; shadow subtype domain.

As to quaternary structure, homodimer. Interacts with histone H3 methylated at 'Lys-9'. Interacts (via Chromo 2; shadow subtype domain) with the MIS12 complex subunit NSL1; the interaction is direct, involves dimeric CBX5, and occurs during interphase. Interacts with POGZ; POGZ and PXVXL motif-containing proteins such as INCENP and TRIM28 compete for interaction with CBX5. Interacts with LRIF1 (via PxVxL motif). Interacts with INCENP. Interacts with TRIM24. Interacts (via the chromoshadow domain) with ATRX; the interaction is direct. Interacts (via the chromoshadow domain) with CHAF1A; the interaction is direct. Interacts (via the chromoshadow domain) with LBR; the interaction is direct. Interacts (via the chromoshadow domain) with NIPBL; the interaction is direct. Interacts (via the chromoshadow domain) with SP100; the interaction is direct. Interacts (via the chromoshadow domain) with STAM2; the interaction is direct. Interacts (via the chromoshadow domain) with TRIM28; the interaction is direct. Interacts (via the chromoshadow domain) with CBX3; the interaction is direct. Interacts with PRR14 (via N-terminus). Interacts with RRP1B. Interacts with HNRNPU (via C-terminus); this interaction is, at least in part, RNA-dependent. Interacts with ZNF263; recruited to the SIX3 promoter along with other proteins involved in chromatin modification and transcriptional corepression where it contributes to transcriptional repression. Interacts with AURKB during mitosis. Interacts with CHAMP1. Interacts with BAHD1. Interacts with HP1BP3. Interacts with CHD3. Interacts with CHD4. Interacts with SMYD5. Interacts with KMT5B. Interacts with KMT5C. (Microbial infection) Interacts with JC virus agnoprotein; this interaction induces the dissociation of CBX5 from LBR, resulting in destabilization of the nuclear envelope. Phosphorylation of HP1 and LBR may be responsible for some of the alterations in chromatin organization and nuclear structure which occur at various times during the cell cycle. Phosphorylated during interphase and possibly hyper-phosphorylated during mitosis. In terms of processing, ubiquitinated.

The protein localises to the nucleus. Its subcellular location is the chromosome. It is found in the centromere. Functionally, component of heterochromatin that recognizes and binds histone H3 tails methylated at 'Lys-9' (H3K9me), leading to epigenetic repression. In contrast, it is excluded from chromatin when 'Tyr-41' of histone H3 is phosphorylated (H3Y41ph). May contribute to the association of heterochromatin with the inner nuclear membrane by interactions with the lamin-B receptor (LBR). Involved in the formation of kinetochore through interaction with the MIS12 complex subunit NSL1. Required for the formation of the inner centromere. The sequence is that of Chromobox protein homolog 5 (CBX5) from Homo sapiens (Human).